A 341-amino-acid chain; its full sequence is L-threonine 3-dehydrogenase (341 aa).

Cysteine 38 is a binding site for Zn(2+). Active-site charge relay system residues include threonine 40 and histidine 43. Residues histidine 63, glutamate 64, cysteine 93, cysteine 96, cysteine 99, and cysteine 107 each coordinate Zn(2+). NAD(+) is bound by residues isoleucine 175, aspartate 195, arginine 200, 262–264, and 286–287; these read LGI and IY.

The protein belongs to the zinc-containing alcohol dehydrogenase family. In terms of assembly, homotetramer. Zn(2+) is required as a cofactor.

Its subcellular location is the cytoplasm. It catalyses the reaction L-threonine + NAD(+) = (2S)-2-amino-3-oxobutanoate + NADH + H(+). It participates in amino-acid degradation; L-threonine degradation via oxydo-reductase pathway; glycine from L-threonine: step 1/2. Functionally, catalyzes the NAD(+)-dependent oxidation of L-threonine to 2-amino-3-ketobutyrate. This is L-threonine 3-dehydrogenase from Salmonella arizonae (strain ATCC BAA-731 / CDC346-86 / RSK2980).